The primary structure comprises 762 residues: Centrosomal protein of 85 kDa (762 aa).

2 disordered regions span residues 1 to 26 (MAMQ…IQKG) and 94 to 119 (VMPS…SKLP). Polar residues-rich tracts occupy residues 14 to 26 (HVTS…IQKG) and 98 to 111 (TLGT…STPV). S17 carries the post-translational modification Phosphoserine. 2 positions are modified to phosphoserine: S126 and S141. Residues 257 to 433 (GLSKPLPSQV…QLIRESLKVA (177 aa)) form a mediates interaction with NEK2 and is required for its function in the suppression of centrosome disjunction region. Coiled-coil stretches lie at residues 334-657 (EHLL…RQAQ) and 723-750 (PDVI…MSDR). Residues 434 to 476 (LQKHSEEVKKQEERVKGRDKHINNLKKKCQKESEQNREKQQRI) are required for centrosome localization and for its function in the suppression of centrosome disjunction. 2 stretches are compositionally biased toward basic and acidic residues: residues 443 to 455 (KQEE…DKHI) and 463 to 474 (QKESEQNREKQQ). 2 disordered regions span residues 443-474 (KQEE…EKQQ) and 541-570 (EAEF…VEME). Phosphoserine is present on S623.

Belongs to the CEP85 family. In terms of assembly, homodimer. Interacts with STIL (via N-terminus); this interaction is essential for robust PLK4 activation and efficient centriole assembly and for PLK4-dependent cell migration. Interacts with PLK4; required for CEP85 to be able to drive centriole duplication and cell migration.

Its subcellular location is the cytoplasm. It localises to the cytoskeleton. The protein resides in the microtubule organizing center. It is found in the centrosome. The protein localises to the spindle pole. Its subcellular location is the nucleus. It localises to the nucleolus. The protein resides in the centriole. It is found in the cell cortex. Acts as a regulator of centriole duplication through a direct interaction with STIL, a key factor involved in the early steps of centriole formation. The CEP85-STIL protein complex acts as a modulator of PLK4-driven cytoskeletal rearrangements and directional cell motility. Acts as a negative regulator of NEK2 to maintain the centrosome integrity in interphase. Suppresses centrosome disjunction by inhibiting NEK2 kinase activity. The protein is Centrosomal protein of 85 kDa of Homo sapiens (Human).